A 503-amino-acid polypeptide reads, in one-letter code: MDFSIKGCDWSKGSAKGFLTGKSDCIVLGVFEAQTLSGAALDIDEAAKGLVSRVIKAGDIDGKLGKTLFLHEVSGIGASRVLLVGLGKQDAFSQKAYNDAVKAAWRALLGTKVVQVTFTLAQLPVPERASDWGVRAAILALRNETYKFTQMKSKPDASAPALKRIVFSVDPADEKAAKIAAKQAVALANGMDLTRDLGNLPGNVCTPTYLANTAKKLAKDWGLKADVLGLKQIQALKMSSFLSVAKGSVEPPQFIVLHYQGAAAKAAPVVLVGKGITFDSGGISLKPGEGMDEMKYDMCGAGSVLGTIRAVAEMGLKINVVAIVPTCENMPAGNANKPGDIVTSMKGLTIEVLNTDAEGRLILCDALTYAERFKPAAVIDVATLTGACIIALGHHNTGLFSKDDALAGELLDASREAGDPAWRLPLDDEYQDQLKSNFADLANIGGRPAGSVTAACFLSRFAENYPWAHLDIAGTAWKSGAAKGATGRPVPLLAQFLIDRAGA.

The Mn(2+) site is built by lysine 274 and aspartate 279. Lysine 286 is a catalytic residue. Residues aspartate 297, aspartate 356, and glutamate 358 each contribute to the Mn(2+) site. Arginine 360 is a catalytic residue.

It belongs to the peptidase M17 family. Mn(2+) serves as cofactor.

The protein resides in the cytoplasm. It carries out the reaction Release of an N-terminal amino acid, Xaa-|-Yaa-, in which Xaa is preferably Leu, but may be other amino acids including Pro although not Arg or Lys, and Yaa may be Pro. Amino acid amides and methyl esters are also readily hydrolyzed, but rates on arylamides are exceedingly low.. The catalysed reaction is Release of an N-terminal amino acid, preferentially leucine, but not glutamic or aspartic acids.. Presumably involved in the processing and regular turnover of intracellular proteins. Catalyzes the removal of unsubstituted N-terminal amino acids from various peptides. The protein is Probable cytosol aminopeptidase of Burkholderia thailandensis (strain ATCC 700388 / DSM 13276 / CCUG 48851 / CIP 106301 / E264).